A 139-amino-acid chain; its full sequence is ATP synthase epsilon chain (139 aa).

The protein belongs to the ATPase epsilon chain family. In terms of assembly, F-type ATPases have 2 components, CF(1) - the catalytic core - and CF(0) - the membrane proton channel. CF(1) has five subunits: alpha(3), beta(3), gamma(1), delta(1), epsilon(1). CF(0) has three main subunits: a, b and c.

Its subcellular location is the cell inner membrane. Produces ATP from ADP in the presence of a proton gradient across the membrane. This Pseudomonas putida (strain W619) protein is ATP synthase epsilon chain.